The primary structure comprises 274 residues: 2,3,4,5-tetrahydropyridine-2,6-dicarboxylate N-succinyltransferase (274 aa).

Residues arginine 103 and aspartate 140 each coordinate substrate.

Belongs to the transferase hexapeptide repeat family. Homotrimer.

The protein resides in the cytoplasm. The catalysed reaction is (S)-2,3,4,5-tetrahydrodipicolinate + succinyl-CoA + H2O = (S)-2-succinylamino-6-oxoheptanedioate + CoA. The protein operates within amino-acid biosynthesis; L-lysine biosynthesis via DAP pathway; LL-2,6-diaminopimelate from (S)-tetrahydrodipicolinate (succinylase route): step 1/3. This chain is 2,3,4,5-tetrahydropyridine-2,6-dicarboxylate N-succinyltransferase, found in Actinobacillus pleuropneumoniae serotype 5b (strain L20).